Reading from the N-terminus, the 113-residue chain is Hydrogenase maturation factor HypA (113 aa).

Histidine 2 provides a ligand contact to Ni(2+). Zn(2+) contacts are provided by cysteine 73, cysteine 76, cysteine 89, and cysteine 92.

It belongs to the HypA/HybF family.

Functionally, involved in the maturation of [NiFe] hydrogenases. Required for nickel insertion into the metal center of the hydrogenase. The polypeptide is Hydrogenase maturation factor HypA (Azotobacter chroococcum mcd 1).